The sequence spans 606 residues: Endonuclease 8-like 3 (606 aa).

Residue Val-2 is the Schiff-base intermediate with DNA; via amino nitrogen of the active site. The segment at 31-51 is disordered; sequence ALQGLGGPGSPPAAPGPMGTS. Residues Asn-194 and Arg-273 each coordinate DNA. An FPG-type zinc finger spans residues 249–283; the sequence is KVYKRPNCGQCCCKITVCRLGENNRMTYFCPHCQK. A RanBP2-type zinc finger spans residues 319–348; sequence SEEQWTCEVCTLINKLSSKTCDACLTSRPA. The residue at position 451 (Ser-451) is a Phosphoserine. Residues Cys-508, His-511, Cys-534, Cys-542, Cys-555, His-557, Cys-580, and Cys-588 each coordinate Zn(2+). 2 GRF-type zinc fingers span residues 508–551 and 555–597; these read CSKH…ADLS and CNHG…AQNG.

It belongs to the FPG family.

The protein resides in the nucleus. It localises to the chromosome. The catalysed reaction is 2'-deoxyribonucleotide-(2'-deoxyribose 5'-phosphate)-2'-deoxyribonucleotide-DNA = a 3'-end 2'-deoxyribonucleotide-(2,3-dehydro-2,3-deoxyribose 5'-phosphate)-DNA + a 5'-end 5'-phospho-2'-deoxyribonucleoside-DNA + H(+). In terms of biological role, DNA glycosylase which prefers single-stranded DNA (ssDNA), or partially ssDNA structures such as bubble and fork structures, to double-stranded DNA (dsDNA). Mediates interstrand cross-link repair in response to replication stress: acts by mediating DNA glycosylase activity, cleaving one of the two N-glycosyl bonds comprising the interstrand cross-link, which avoids the formation of a double-strand break but generates an abasic site that is bypassed by translesion synthesis polymerases. In vitro, displays strong glycosylase activity towards the hydantoin lesions spiroiminodihydantoin (Sp) and guanidinohydantoin (Gh) in both ssDNA and dsDNA; also recognizes FapyA, FapyG, 5-OHU, 5-OHC, 5-OHMH, Tg and 8-oxoA lesions in ssDNA. No activity on 8-oxoG detected. Also shows weak DNA-(apurinic or apyrimidinic site) lyase activity. In vivo, appears to be the primary enzyme involved in removing Sp and Gh from ssDNA in neonatal tissues. In Bos taurus (Bovine), this protein is Endonuclease 8-like 3 (NEIL3).